The sequence spans 476 residues: Bifunctional protein HldE (476 aa).

The interval 1–319 (MKISLPAFEK…AALNLSHGES (319 aa)) is ribokinase. 195–198 (NMSE) is an ATP binding site. Aspartate 264 is a catalytic residue. Residues 345 to 476 (MTNGCFDILH…AIIENIMAKQ (132 aa)) are cytidylyltransferase.

The protein in the N-terminal section; belongs to the carbohydrate kinase PfkB family. It in the C-terminal section; belongs to the cytidylyltransferase family. In terms of assembly, homodimer.

The enzyme catalyses D-glycero-beta-D-manno-heptose 7-phosphate + ATP = D-glycero-beta-D-manno-heptose 1,7-bisphosphate + ADP + H(+). It catalyses the reaction D-glycero-beta-D-manno-heptose 1-phosphate + ATP + H(+) = ADP-D-glycero-beta-D-manno-heptose + diphosphate. It participates in nucleotide-sugar biosynthesis; ADP-L-glycero-beta-D-manno-heptose biosynthesis; ADP-L-glycero-beta-D-manno-heptose from D-glycero-beta-D-manno-heptose 7-phosphate: step 1/4. The protein operates within nucleotide-sugar biosynthesis; ADP-L-glycero-beta-D-manno-heptose biosynthesis; ADP-L-glycero-beta-D-manno-heptose from D-glycero-beta-D-manno-heptose 7-phosphate: step 3/4. Functionally, catalyzes the phosphorylation of D-glycero-D-manno-heptose 7-phosphate at the C-1 position to selectively form D-glycero-beta-D-manno-heptose-1,7-bisphosphate. Catalyzes the ADP transfer from ATP to D-glycero-beta-D-manno-heptose 1-phosphate, yielding ADP-D-glycero-beta-D-manno-heptose. The sequence is that of Bifunctional protein HldE from Shewanella loihica (strain ATCC BAA-1088 / PV-4).